A 511-amino-acid polypeptide reads, in one-letter code: uncharacterized protein (511 aa).

The 33-residue stretch at 13–45 folds into the LisH domain; that stretch reads IYDALNMLVYDYLLKMKYEGSAKIFFNEAGLEN. Residues 172–212 form a disordered region; the sequence is PRFEEQGVPPAKMAPKQFRDEGRSGNVESPSIATNQEGSSP. The span at 197-210 shows a compositional bias: polar residues; that stretch reads NVESPSIATNQEGS.

This is an uncharacterized protein from Encephalitozoon cuniculi (strain GB-M1) (Microsporidian parasite).